Here is a 354-residue protein sequence, read N- to C-terminus: Probable N-acetylmuramoyl-L-alanine amidase (354 aa).

The first 39 residues, 1 to 39 (MVKVINNFVKVNQYDRPGLKLAAVKGIVMHWTATPGASA), serve as a signal peptide directing secretion. An N-acetylmuramoyl-L-alanine amidase domain is found at 40–152 (LNERNYFNGT…YDVTNKGCPT (113 aa)).

It belongs to the N-acetylmuramoyl-L-alanine amidase 2 family.

The protein resides in the secreted. The catalysed reaction is Hydrolyzes the link between N-acetylmuramoyl residues and L-amino acid residues in certain cell-wall glycopeptides.. This Bacillus licheniformis protein is Probable N-acetylmuramoyl-L-alanine amidase.